Consider the following 195-residue polypeptide: Peptidyl-tRNA hydrolase (195 aa).

Tyrosine 18 is a binding site for tRNA. Histidine 23 (proton acceptor) is an active-site residue. Tyrosine 69, asparagine 71, and asparagine 117 together coordinate tRNA.

It belongs to the PTH family. In terms of assembly, monomer.

Its subcellular location is the cytoplasm. The catalysed reaction is an N-acyl-L-alpha-aminoacyl-tRNA + H2O = an N-acyl-L-amino acid + a tRNA + H(+). Functionally, hydrolyzes ribosome-free peptidyl-tRNAs (with 1 or more amino acids incorporated), which drop off the ribosome during protein synthesis, or as a result of ribosome stalling. Its function is as follows. Catalyzes the release of premature peptidyl moieties from peptidyl-tRNA molecules trapped in stalled 50S ribosomal subunits, and thus maintains levels of free tRNAs and 50S ribosomes. The sequence is that of Peptidyl-tRNA hydrolase from Nitrosomonas europaea (strain ATCC 19718 / CIP 103999 / KCTC 2705 / NBRC 14298).